Reading from the N-terminus, the 223-residue chain is Phage shock protein A homolog (223 aa).

A coiled-coil region spans residues 29–185 (IDQALRDMRS…AGMEDRNKAM (157 aa)).

Belongs to the PspA/Vipp/IM30 family.

This chain is Phage shock protein A homolog, found in Deinococcus radiodurans (strain ATCC 13939 / DSM 20539 / JCM 16871 / CCUG 27074 / LMG 4051 / NBRC 15346 / NCIMB 9279 / VKM B-1422 / R1).